Consider the following 156-residue polypeptide: Small ribosomal subunit protein uS7 (156 aa).

The protein belongs to the universal ribosomal protein uS7 family. In terms of assembly, part of the 30S ribosomal subunit. Contacts proteins S9 and S11.

Its function is as follows. One of the primary rRNA binding proteins, it binds directly to 16S rRNA where it nucleates assembly of the head domain of the 30S subunit. Is located at the subunit interface close to the decoding center, probably blocks exit of the E-site tRNA. This chain is Small ribosomal subunit protein uS7, found in Dehalococcoides mccartyi (strain ATCC BAA-2100 / JCM 16839 / KCTC 5957 / BAV1).